The primary structure comprises 539 residues: Phosphoenolpyruvate carboxykinase (ATP) (539 aa).

R64, Y206, and K212 together coordinate substrate. ATP is bound by residues K212, H231, and 247–255; that span reads GLSGTGKTT. Residues K212 and H231 each coordinate Mn(2+). D268 is a Mn(2+) binding site. Residues E296, R332, 448–449, and T454 contribute to the ATP site; that span reads RI. Residue R332 participates in substrate binding.

This sequence belongs to the phosphoenolpyruvate carboxykinase (ATP) family. Monomer. Requires Mn(2+) as cofactor.

It is found in the cytoplasm. It carries out the reaction oxaloacetate + ATP = phosphoenolpyruvate + ADP + CO2. The protein operates within carbohydrate biosynthesis; gluconeogenesis. Involved in the gluconeogenesis. Catalyzes the conversion of oxaloacetate (OAA) to phosphoenolpyruvate (PEP) through direct phosphoryl transfer between the nucleoside triphosphate and OAA. The polypeptide is Phosphoenolpyruvate carboxykinase (ATP) (Edwardsiella ictaluri (strain 93-146)).